A 368-amino-acid polypeptide reads, in one-letter code: Phosphate acyltransferase (368 aa).

A disordered region spans residues 334 to 368 (EGSLEQAARDASGAGHASPIAGQPAEPYAAQSSKA).

It belongs to the PlsX family. As to quaternary structure, homodimer. Probably interacts with PlsY.

Its subcellular location is the cytoplasm. It carries out the reaction a fatty acyl-[ACP] + phosphate = an acyl phosphate + holo-[ACP]. It participates in lipid metabolism; phospholipid metabolism. Its function is as follows. Catalyzes the reversible formation of acyl-phosphate (acyl-PO(4)) from acyl-[acyl-carrier-protein] (acyl-ACP). This enzyme utilizes acyl-ACP as fatty acyl donor, but not acyl-CoA. The protein is Phosphate acyltransferase of Paraburkholderia xenovorans (strain LB400).